Reading from the N-terminus, the 189-residue chain is Peptidyl-tRNA hydrolase (189 aa).

Tyrosine 15 is a tRNA binding site. The active-site Proton acceptor is histidine 20. 3 residues coordinate tRNA: phenylalanine 66, asparagine 68, and asparagine 114.

The protein belongs to the PTH family. In terms of assembly, monomer.

Its subcellular location is the cytoplasm. It catalyses the reaction an N-acyl-L-alpha-aminoacyl-tRNA + H2O = an N-acyl-L-amino acid + a tRNA + H(+). Functionally, hydrolyzes ribosome-free peptidyl-tRNAs (with 1 or more amino acids incorporated), which drop off the ribosome during protein synthesis, or as a result of ribosome stalling. Catalyzes the release of premature peptidyl moieties from peptidyl-tRNA molecules trapped in stalled 50S ribosomal subunits, and thus maintains levels of free tRNAs and 50S ribosomes. In Streptococcus pneumoniae (strain Taiwan19F-14), this protein is Peptidyl-tRNA hydrolase.